Here is a 473-residue protein sequence, read N- to C-terminus: Protein nucleotidyltransferase YdiU (473 aa).

8 residues coordinate ATP: Gly79, Gly81, Arg82, Lys102, Asp114, Gly115, Arg165, and Arg172. Asp241 functions as the Proton acceptor in the catalytic mechanism. The Mg(2+) site is built by Asn242 and Asp251. Residue Asp251 coordinates ATP.

The protein belongs to the SELO family. The cofactor is Mg(2+). Requires Mn(2+) as cofactor.

It catalyses the reaction L-seryl-[protein] + ATP = 3-O-(5'-adenylyl)-L-seryl-[protein] + diphosphate. The catalysed reaction is L-threonyl-[protein] + ATP = 3-O-(5'-adenylyl)-L-threonyl-[protein] + diphosphate. The enzyme catalyses L-tyrosyl-[protein] + ATP = O-(5'-adenylyl)-L-tyrosyl-[protein] + diphosphate. It carries out the reaction L-histidyl-[protein] + UTP = N(tele)-(5'-uridylyl)-L-histidyl-[protein] + diphosphate. It catalyses the reaction L-seryl-[protein] + UTP = O-(5'-uridylyl)-L-seryl-[protein] + diphosphate. The catalysed reaction is L-tyrosyl-[protein] + UTP = O-(5'-uridylyl)-L-tyrosyl-[protein] + diphosphate. Nucleotidyltransferase involved in the post-translational modification of proteins. It can catalyze the addition of adenosine monophosphate (AMP) or uridine monophosphate (UMP) to a protein, resulting in modifications known as AMPylation and UMPylation. The polypeptide is Protein nucleotidyltransferase YdiU (Marinomonas sp. (strain MWYL1)).